The following is a 239-amino-acid chain: Skn-1 dependent zygotic transcript 1 protein (239 aa).

Expressed in mesendodermal precursor cells of embryos.

In terms of biological role, may have a role in mesendoderm development during embryogenesis. The protein is Skn-1 dependent zygotic transcript 1 protein (sdz-1) of Caenorhabditis elegans.